Consider the following 240-residue polypeptide: MKIDIIISADDIKKEKILHKSVIVVDMLRATSVIITAINNGCREVIPVLTIEEALEIYHKNREKYVMGGERKALKIEGFHCSNSPLEYSRQVVENKTLVITTSNGTKAIKGSIMAKNILIGALINADEVANRSINLNNDVVIVNAGTCGQFSIDDFICSGYMINCVIKKIKVDLTDIARTALYIYEQNPDIITFIKKASHYKRIKKLKLYDDLEYCCRKDIIKIVPEYIDGIIKCNKLIY.

Belongs to the ComB family. Mg(2+) serves as cofactor.

The enzyme catalyses (2R)-O-phospho-3-sulfolactate + H2O = (2R)-3-sulfolactate + phosphate. This Clostridium kluyveri (strain NBRC 12016) protein is Probable 2-phosphosulfolactate phosphatase.